The sequence spans 198 residues: MLMSDSLNAAALDQLFRTARTQNAFADTPVSQEVLRELYELVKWGPTAANSGPARFVFVTSADGKAKLKPALSEGNAAKTLAAPVTVIVAHDEDFHEKLPYLFPHADAKSWFDGPREGRAESAFRNGSLQGAYLILAARALGLDAGPMSGFDNAKVDAAFFAGTPIKSNFLVNLGYGDPAGLFPRSPRLSFDEAARFE.

It belongs to the nitroreductase family. HadB/RutE subfamily. FMN is required as a cofactor.

The polypeptide is Putative NADH dehydrogenase/NAD(P)H nitroreductase XOO4267 (Xanthomonas oryzae pv. oryzae (strain KACC10331 / KXO85)).